A 156-amino-acid chain; its full sequence is Transcriptional repressor NrdR (156 aa).

A zinc finger lies at 3–34; it reads CPFCHSDNDKVQDSRTAEAGYVVRRKRLCQTC. Residues 49–139 enclose the ATP-cone domain; it reads VRVVKSDETR…VYRDFDDAKD (91 aa).

This sequence belongs to the NrdR family. Zn(2+) is required as a cofactor.

Functionally, negatively regulates transcription of bacterial ribonucleotide reductase nrd genes and operons by binding to NrdR-boxes. This chain is Transcriptional repressor NrdR, found in Rhodopirellula baltica (strain DSM 10527 / NCIMB 13988 / SH1).